The sequence spans 95 residues: Small ribosomal subunit protein bS16 (95 aa).

This sequence belongs to the bacterial ribosomal protein bS16 family.

This Roseiflexus sp. (strain RS-1) protein is Small ribosomal subunit protein bS16.